The chain runs to 199 residues: NAD(P)H dehydrogenase (quinone) (199 aa).

The Flavodoxin-like domain maps to 4 to 190; sequence VLVLYYSTYG…EGARHQGELI (187 aa). Residues 10–15 and 78–80 each bind FMN; these read STYGHV and TRF. Y12 is an NAD(+) binding site. A substrate-binding site is contributed by W98. Residues 113 to 119 and H134 contribute to the FMN site; that span reads STATQHG.

Belongs to the WrbA family. Requires FMN as cofactor.

The enzyme catalyses a quinone + NADH + H(+) = a quinol + NAD(+). It carries out the reaction a quinone + NADPH + H(+) = a quinol + NADP(+). This is NAD(P)H dehydrogenase (quinone) from Cupriavidus metallidurans (strain ATCC 43123 / DSM 2839 / NBRC 102507 / CH34) (Ralstonia metallidurans).